We begin with the raw amino-acid sequence, 153 residues long: Prostaglandin E synthase (153 aa).

Topologically, residues 1-13 are lumenal; that stretch reads MPPSGLELMNGQV. Residues 14 to 42 form a helical membrane-spanning segment; it reads LPAFLLCSALLVIKMYVVAVITGQVRLRK. R39 lines the glutathione pocket. The Cytoplasmic segment spans residues 43–61; it reads KAFANPEDAQRHGGLQYCR. The chain crosses the membrane as a helical span at residues 62-91; that stretch reads NDPDVERCLRAHRNDMETIYPFLFLGFVYS. Residue 74-78 participates in glutathione binding; it reads RNDME. Residues 92 to 96 are Lumenal-facing; sequence FLGPN. The helical transmembrane segment at 97-120 threads the bilayer; sequence PFVARMHFLVFFLGRMVHTVAYLG. Glutathione-binding residues include H114 and Y118. Residues 121–124 lie on the Cytoplasmic side of the membrane; sequence KLRA. A helical transmembrane segment spans residues 125–153; the sequence is PTRSLAYTLAQLPCASMALQIVWEAARHL. A glutathione-binding site is contributed by 127 to 131; sequence RSLAY.

It belongs to the MAPEG family. In terms of assembly, homotrimer. Glutathione is required as a cofactor.

It localises to the membrane. It is found in the cytoplasm. Its subcellular location is the perinuclear region. The enzyme catalyses prostaglandin H2 = prostaglandin E2. The catalysed reaction is 2-glyceryl-prostaglandin H2 = 2-glyceryl-prostaglandin E2. It catalyses the reaction prostaglandin G2 = (15S)-15-hydroperoxy-prostaglandin E2. It carries out the reaction 1-chloro-2,4-dinitrobenzene + glutathione = 2,4-dinitrophenyl-S-glutathione + chloride + H(+). The enzyme catalyses (5S)-hydroperoxy-(6E,8Z,11Z,14Z)-eicosatetraenoate + 2 glutathione = (5S)-hydroxy-(6E,8Z,11Z,14Z)-eicosatetraenoate + glutathione disulfide + H2O. Its pathway is lipid metabolism; prostaglandin biosynthesis. Terminal enzyme of the cyclooxygenase (COX)-2-mediated prostaglandin E2 (PGE2) biosynthetic pathway. Catalyzes the glutathione-dependent oxidoreduction of prostaglandin endoperoxide H2 (PGH2) to prostaglandin E2 (PGE2) in response to inflammatory stimuli. Plays a key role in inflammation response, fever and pain. Also catalyzes the oxidoreduction of endocannabinoids into prostaglandin glycerol esters and PGG2 into 15-hydroperoxy-PGE2. In addition, displays low glutathione transferase and glutathione-dependent peroxidase activities, toward 1-chloro-2,4-dinitrobenzene and 5-hydroperoxyicosatetraenoic acid (5-HPETE), respectively. In Bos taurus (Bovine), this protein is Prostaglandin E synthase (PTGES).